A 224-amino-acid chain; its full sequence is uncharacterized protein (224 aa).

Residues 10–77 (TPYYLQFYNQ…DRNGFSITSL (68 aa)) enclose the HTH gntR-type domain. Residues 37–56 (ETQLAKSFGVSRSPIREAMR) constitute a DNA-binding region (H-T-H motif).

This is an uncharacterized protein from Bacillus subtilis (strain 168).